The primary structure comprises 436 residues: MDKATVYYFVGIKGSGMSSLALILHDKGYQVEGSDIEQYTFTQKGLAAAGIKMLPFSEDNIREGLTVIAGNSFTDDHPEIKKAREMGLPVYRYHEFLGKLMEGFTSIGVAGTHGKTSTTGLLSHVLSHIAPTSYLIGDGTGKGTPDARFFVFEADEYRRHFVAYHPDYAIMTNVDFDHPDYYKDLADVQSAFQQFGNQVKKGIFAWGDDESLRHLDVDTPIYYYGTNDRDDFQAVNIKRTTKGSSFEVKYHDESLGKFEIPLFGEHNVLNSTAVIAVSYFEKVNLDEIRRELLDFSGVKRRFSEHQVGDMVMIDDYAHHPSEIKATLDAARQKYPDKEILAVFQPHTFSRTKALMDGFAASLSKADHVFLTNIFSSAREKSGDVSSKDLAAKLPNGGEIITTDDMSALTAYHNAVAVFMGAGDIQKYEKIYEDQMK.

111–117 serves as a coordination point for ATP; that stretch reads GTHGKTS.

It belongs to the MurCDEF family.

The protein localises to the cytoplasm. The enzyme catalyses UDP-N-acetyl-alpha-D-muramate + L-alanine + ATP = UDP-N-acetyl-alpha-D-muramoyl-L-alanine + ADP + phosphate + H(+). Its pathway is cell wall biogenesis; peptidoglycan biosynthesis. Cell wall formation. This chain is UDP-N-acetylmuramate--L-alanine ligase, found in Lactiplantibacillus plantarum (strain ATCC BAA-793 / NCIMB 8826 / WCFS1) (Lactobacillus plantarum).